Reading from the N-terminus, the 505-residue chain is ATP synthase subunit alpha, chloroplastic (505 aa).

170-177 (GDRQTGKT) contributes to the ATP binding site.

Belongs to the ATPase alpha/beta chains family. F-type ATPases have 2 components, CF(1) - the catalytic core - and CF(0) - the membrane proton channel. CF(1) has five subunits: alpha(3), beta(3), gamma(1), delta(1), epsilon(1). CF(0) has four main subunits: a, b, b' and c.

It is found in the plastid. The protein localises to the chloroplast thylakoid membrane. It catalyses the reaction ATP + H2O + 4 H(+)(in) = ADP + phosphate + 5 H(+)(out). Its function is as follows. Produces ATP from ADP in the presence of a proton gradient across the membrane. The alpha chain is a regulatory subunit. This is ATP synthase subunit alpha, chloroplastic from Oenothera biennis (German evening primrose).